The sequence spans 122 residues: Large ribosomal subunit protein bL20c (122 aa).

This sequence belongs to the bacterial ribosomal protein bL20 family.

The protein resides in the plastid. Its subcellular location is the chloroplast. Its function is as follows. Binds directly to 23S ribosomal RNA and is necessary for the in vitro assembly process of the 50S ribosomal subunit. It is not involved in the protein synthesizing functions of that subunit. The polypeptide is Large ribosomal subunit protein bL20c (Dioscorea elephantipes (Elephant's foot yam)).